Consider the following 363-residue polypeptide: Homeobox protein Hox-A2a (363 aa).

Disordered regions lie at residues 30-88 (DSFQ…LPPE), 98-117 (SKRN…GPVC), 189-220 (RMKH…SDEE), and 268-308 (DKNL…LDVS). The segment covering 31-44 (SFQSSSIKSSTLSR) has biased composition (polar residues). Residues 88–93 (EYPWMR) carry the Antp-type hexapeptide motif. Residues 103–113 (LPNSTTTTISN) show a composition bias toward polar residues. The homeobox DNA-binding region spans 137–196 (SRRLRTAYTNTQLLELEKEFHFNKYLCRPRRVEIAALLDLTERQVKVWFQNRRMKHKRQT).

It belongs to the Antp homeobox family. Proboscipedia subfamily.

It localises to the nucleus. Sequence-specific transcription factor which is part of a developmental regulatory system that provides cells with specific positional identities on the anterior-posterior axis. This Takifugu rubripes (Japanese pufferfish) protein is Homeobox protein Hox-A2a (hoxa2a).